A 424-amino-acid polypeptide reads, in one-letter code: Histidine--tRNA ligase (424 aa).

Belongs to the class-II aminoacyl-tRNA synthetase family. Homodimer.

It localises to the cytoplasm. The enzyme catalyses tRNA(His) + L-histidine + ATP = L-histidyl-tRNA(His) + AMP + diphosphate + H(+). This is Histidine--tRNA ligase from Shewanella halifaxensis (strain HAW-EB4).